The following is a 335-amino-acid chain: Protein BRASSINAZOLE-RESISTANT 2 (335 aa).

The segment covering 1-19 has biased composition (low complexity); sequence MTSDGATSTSAAAAAAAMA. Disordered stretches follow at residues 1–40, 85–122, and 164–190; these read MTSD…RRRR, TYRK…FDSP, and PPLR…KPLP. The required for DNA-binding stretch occupies residues 22 to 103; sequence RKPSWREREN…PGDMAGSSSR (82 aa). Residues 99–120 are compositionally biased toward polar residues; sequence GSSSRATPYSSHNQSPLSSTFD. At Thr-175 the chain carries Phosphothreonine. The segment at 231–251 is PEST-like; the sequence is HAPATIPECDESDSSTVDSGH.

The protein belongs to the BZR/LAT61 family. As to quaternary structure, interacts with ASK7/BIN2 through its C-terminal domain and with the bHLH transcription factors BIM1, BIM2 and BIM3 through its C- and N-terminal domains. Interacts (via N-terminus) with REF6 and ELF6. Interacts with MYB30. Interacts with IWS1. Interacts with ASHH2/SDG8. Binds to MYB56 when dephosphorylated in the nucleus of quiescent center (QC) cells. Binds to WRKY46, WRKY54 and WRKY70 to cooperatively regulate the expression of target genes. Phosphorylated by ASK7/BIN2. Phosphorylation increases protein degradation and/or interferes with the nuclear localization. In terms of tissue distribution, ubiquitously expressed in cotyledons, leaves, hypocotyls and roots.

It is found in the nucleus. Its subcellular location is the cytoplasm. Positive regulator of brassinosteroid (BR) signaling. Transcription factor that activates target gene expression by binding specifically to the DNA sequence 5'-CANNTG-3'(E box) through its N-terminal domain. Can bind individually to the promoter as a homodimer or synergistically as a heterodimer with BIM1, BIM2 or BIM3. The C-terminal domain is probably involved in transcriptional activation. Recruits the transcription elongation factor IWS1 to control BR-regulated gene expression. Forms a trimeric complex with IWS1 and ASHH2/SDG8 to regulate BR-regulated gene expression. Promotes quiescent center (QC) self-renewal by cell divisions in the primary root. Binds to the E-boxes of the BRAVO promoter to repress its expression. The chain is Protein BRASSINAZOLE-RESISTANT 2 from Arabidopsis thaliana (Mouse-ear cress).